We begin with the raw amino-acid sequence, 113 residues long: MQQNGDPRRTNRIVRYKPLDSTANQQQAISEDPLPEYMNVLGMIFSMCGLMIRMKWCSWLALVCSCISFANTRTSDDAKQIVSSFMLSVSAVVMSYLQNPSPIIPPWVTLLQS.

A helical transmembrane segment spans residues 81-97; it reads IVSSFMLSVSAVVMSYL.

This sequence belongs to the Asterix family.

It localises to the membrane. In Caenorhabditis elegans, this protein is Protein Asterix.